The chain runs to 1101 residues: MKNDVVRWSRQPTSNTTNSSSSSRSDSNSTHKHRSKSNKLNARQLGSNAARSCQQRSSVATTLEDEQQTIIECDIGNFNFDCNLFKTSFLTQHKQKRSGKSSSKSKSNRSRPLAKTKAVFLLALQFSAVVFLCNINVGFVAGSVATAASSAGGSSPAAPSSAPSSPPTVAVPPPPPPSSALKVDPNGQSPVLPPYVLDYETGGKAKLTPNNGKFGQSGSSGSNNNHIVGHYTHTWAVHIPNGDNGMADAVAKDHGFVNLGKIFDDHYHFAHHKVSKRSLSPATHHQTRLDDDDRVHWAKQQRAKSRSKRDFIRMRPSRTSSRAMSMVDAMSFNDSKWPQMWYLNRGGGLDMNVIPAWKMGITGKGVVVTILDDGLESDHPDIQDNYDPKASYDVNSHDDDPMPHYDMTDSNRHGTRCAGEVAATANNSFCAVGIAYGASVGGVRMLDGDVTDAVEARSLSLNPQHIDIYSASWGPDDDGKTVDGPGELASRAFIEGTTKGRGGKGSIFIWASGNGGREQDNCNCDGYTNSIWTLSISSATEEGHVPWYSEKCSSTLATTYSSGGQGEKQVVTTDLHHSCTVSHTGTSASAPLAAGIAALVLQSNQNLTWRDLQHIVVRTAKPANLKDPSWSRNGVGRRVSHSFGYGLMDAAEMVRVARNWKAVPEQQRCEINAPHVDKVIPPRTHITLQLTVNHCRSVNYLEHVQAKITLTSQRRGDIQLFLRSPANTSVTLLTPRIHDNSRSGFNQWPFMSVHTWGESPQGNWQLEIHNEGRYMAQITQWDMIFYGTETPAQPDDVANPSQSNQFNLYGNDMAHNDVEYDSTGQWRNMQQVGEVGMTRDHSNTAACLKWSDRKCLECNDSAYMFEDQCYDVCPVHTYPLDKFQAEEDEQDDEVTRGPVNPYSSSPMDHSLLMSNSLDDKQDPLQAEDRRRRSSLTQLVEVPSRVCAACDRSCLECYGALASQCSTCSPGSQLRKILNETFCYAYVVRSTGMASVVDISKMDDRDTQQYMTGTTVLLLVSVIFTLMGVAVAGGIVYHRRAMARSNELYSRVSLVPGDESDSDEDELFTAHFPARKSGVNIYRDEAPSEKIFEEDEISHLVP.

Residues 1–57 (MKNDVVRWSRQPTSNTTNSSSSSRSDSNSTHKHRSKSNKLNARQLGSNAARSCQQRS) are disordered. The segment covering 13–28 (TSNTTNSSSSSRSDSN) has biased composition (low complexity). N-linked (GlcNAc...) asparagine glycans are attached at residues asparagine 15, asparagine 18, and asparagine 28. The segment covering 38 to 57 (NKLNARQLGSNAARSCQQRS) has biased composition (polar residues). N-linked (GlcNAc...) asparagine glycosylation is present at asparagine 108. A helical transmembrane segment spans residues 119 to 139 (VFLLALQFSAVVFLCNINVGF). Positions 150–163 (SAGGSSPAAPSSAP) are enriched in low complexity. The interval 150 to 187 (SAGGSSPAAPSSAPSSPPTVAVPPPPPPSSALKVDPNG) is disordered. The span at 164 to 178 (SSPPTVAVPPPPPPS) shows a compositional bias: pro residues. A glycan (N-linked (GlcNAc...) asparagine) is linked at asparagine 333. In terms of domain architecture, Peptidase S8 spans 340 to 654 (MWYLNRGGGL…YGLMDAAEMV (315 aa)). Active-site charge relay system residues include aspartate 372 and histidine 413. Asparagine 426 is a glycosylation site (N-linked (GlcNAc...) asparagine). 2 cysteine pairs are disulfide-bonded: cysteine 430-cysteine 579 and cysteine 522-cysteine 552. Serine 587 (charge relay system) is an active-site residue. Asparagine 606 carries N-linked (GlcNAc...) asparagine glycosylation. One can recognise a P/Homo B domain in the interval 662-791 (AVPEQQRCEI…DMIFYGTETP (130 aa)). Cysteine 669 and cysteine 695 form a disulfide bridge. N-linked (GlcNAc...) asparagine glycosylation is found at asparagine 727 and asparagine 859. Residues 886-915 (EEDEQDDEVTRGPVNPYSSSPMDHSLLMSN) are disordered. Residues 901–915 (PYSSSPMDHSLLMSN) are compositionally biased toward polar residues. N-linked (GlcNAc...) asparagine glycosylation is present at asparagine 978. The helical transmembrane segment at 1014–1034 (TVLLLVSVIFTLMGVAVAGGI) threads the bilayer.

Belongs to the peptidase S8 family. Furin subfamily. It depends on Ca(2+) as a cofactor. As to expression, in adults, isoform 1-CRR is expressed in CNS, fat body, and female reproductive tissues, and in embryos, in anal pads, hindgut, developing antennomaxillary complex, oenocytes, clipeolabrum, pharynx, trachea, CNS and developing posterior spiracles.

The protein resides in the golgi apparatus membrane. It catalyses the reaction Release of mature proteins from their proproteins by cleavage of -Arg-Xaa-Yaa-Arg-|-Zaa- bonds, where Xaa can be any amino acid and Yaa is Arg or Lys. Releases albumin, complement component C3 and von Willebrand factor from their respective precursors.. Its function is as follows. Furin is likely to represent the ubiquitous endoprotease activity within constitutive secretory pathways and capable of cleavage at the RX(K/R)R consensus motif. The polypeptide is Furin-like protease 1, isoform 1-CRR (Fur1) (Drosophila melanogaster (Fruit fly)).